Here is a 3013-residue protein sequence, read N- to C-terminus: MNLHQVLTGAVNPGDHCFAVGSVGEQRFTAYASGCDIVILGSNFERLQIIPGAKHGNIQVGCVDCSMQQGKIAASYGNVISVFEPVSLPKKRKNLEFYSQWQKSGQFFLDSIAHNITWDPAGNRLLTGSSCLQLWCNSRKQTEDENPDKTDLNFGNWMCIWHCKTASQVHLMKFSPDGEFFATAGKDDCLLKVWYNVENWRPAVTSPDKNSEKQSQGEIDFSFVYLAHPRAVNGFSWRKTSKYMPRASVCNVLLTCCKDNVCRLWVETFLPNDCFLYGSDCNHWCEPVSLTNNLKRNASSKDRVQSALEVNLRPFRRGRSRSLALVAHTGYLPHQQDPHHAHRNTPLHANALCHFHIAASINPATDIPLLPSITSLSLNENEEKCGPFVVHWLNNKELHFTLSMEVFLQQLRKSFEQPSSEASVEDSIQADLKSDEELDDGVDDLKINHEKKELDEDKMLPSSSFTPLSSAAVDHQIEVLLSEWSKNADMLFSIHPMDGSLLVWHVDWLDEYQPGMFRQVQVSFVSRIPVAFPTGDANSLCKSIVMYACTKNVDLAIQQGKQRPTGLTRSTSMLISSAHSKSSNNLKLSIFTPNVMMISKHADGSLNQWLVSFAEESAFSTVLSISHKSRYCGHRFHLNDLACHSVLPLLLTTSHHNALRTPNVGNQKQAHDAVNTEECSLAQQNKSNVDMAFQDPNAIYSELILWRVDPVGPLSFSGGVSELARINSLHVSAFSNVAWLPTLIPSYCLGAYCNSPSACFVASDGQYLRLYEAVIDAKKLLYELSNPEISKYVGEVFNIVSQQSTARPGCIIALDSITKLHGRKTQLLHVFQEDFILNNLEKKRLGVDNILLDSDSSCNGFSEKFYLVVIECTEDNRSLLRMWDLHLRSTPVSLDERIDTKISEASWLPEEHYSSSPEKILSPFSQKFQACRANLQSTSKLSLFSEMVYSKELDLPEGVEIISVKPSAGHLSSSSIYPVCSAPYLLATSCSDDKVRFWRCRVTNGESATSKNGKLDVVYVWEEWPLLIEDGLENNSSVTVPGRPVEVSCAHTSRLAVAYKQPTGNSRSQEFVMHVSIFECESTGGSCWILEQTIHLDELSTVLDSGISIDSNLVAYNKQETYLVSKESITSNTKHLVHLDWMSREDGSHILTVGIGSKLFMYGPMAGKVQDQTGKENQAFPLWDSTKIVPLSKFVLLRSVDLVSSVEGAPPFPVSLSWVRDGILVVGMDCEMHVYSQWQPSNKQEPVISESYNGSTPSILSLIKQSNSSSSGLHPPKKTLTRSMTSLAQKICGKKSIFDPSVDMEDSGLFEAAHVLSPTLPQYHPLQLLELMDLGKVRRAKAILSHLVKCIAGEVVALNEAESNHERRLRSLTISASGSTTRDPQAFNKADSRDYTEIDSVPPLPLYALLAADDDSYCSSLEKTGSESSLKKSKQLSKESYDELFQTSVLMSDNHMLETDEENTQPRVIDLSQYSPTYFGPEHAQVLSGHLLHSSLPGLTRMEQMSLMALADTIATTSTDIGESRDRNQGGETLDECGLKFLLAVRLHTFLTTSLPAYRAQLLHQGLSTGHFAWAFHSVAEEELLNMLPAMQKDDPTWSELRAMGVGWWVRNARILRRCIEKVAKAAFHRNNDPLDAAIFYLAMKKKAVIWGLYRSQKDTKMTQFFGHNFEEERWRKAALKNAFSLLGKQRFEHSAAFFLLGGCLKDAIEVCLEKLNDIQLALVIARLFESEFDKSATYKSILRKKVLGIGSPASELSSSSINAHHDPFLRSMAHWILEDYSAALETLIKQPVTEDEDQVMMSACNPIVFNFYNYLRTHPLLLRRHFGSSSETFSTHMTLAGKSGLAGTINLSERRLFFTTASAHLKAGCPMLALEVLSKMPKVSKKAKPCCRGSSFLTSKDSSLKLDVREDKCCAADWSPSLTNGLESSSEGSSERHSHSTLSFDWSQPSVVFQDDSLELKWDSDNDEENEDPPISMKEIRPLQRKTVKEIDELSSYTDSLSTLDENDILNPSEDIIAVQLKFRACLKILTVELRTLSTGYEIDGGKLRYQLYHWLEKEVVALQRTCDFCSDADQLQTTFSQSADESGSTEDADDLHHQTKVKQLRESFQEKRQWLLKYQSLLRMFLSYCVLHGSHGGGLASVRMELILLLQESQQETAEPIFSNPLSEQTSVPLLFACTASAKTVVANPLLHLSNLTHDILHAIINFDSPPHPDSQTNKVYVMHTLAASLSACIYQCLCGSHNYSSFQTNQFTGMVYQTVLLAHRHSLRTGSLDESVTPNTSPAQWPGINFLIQLLNSSGEEAQSGLTVLLCEILTAVYLSLFIHGLATHSSNELFRIVAHPLNEKMWSAVFGGGAHVPSKGQANSKALSVEGEKQNRHISPSKVSARESPVSSSSGNQEPPAVKEKFVPPELSIWDYFIAKPFLPPSQSRAEYDSEESLESDDEEEEDDDDALPSGLQLHEHSNSNSFSWSLMRLAMVQLVLNNLKTFYPFAGHDLAELPVSSPLCHAVLKTLQCWEQVLLRRLEIHGGPPQNYISSHTSEENVSAGPAILRHKALLEPTNTPFKSKNHLALSVKRLWQYLVKQEEIQETFIRNIFTKKRCLNEIEADLGYPGGKARIIHKESDIITAFAVNRANRNCIAIASSHDVQELDVSAILATQIYTWVDDDTETETKGSEDFLVIHARDDLSAVQGSTPYTHSNPGTPINMPWLGSTQTGRGASVMLKKAINNVRRMTSHPTLPYYLTGAQDGSVRMFEWGHSQQITCFRSGGNSRITRMRFNYQGNKFGIVDADGYLSLYQTNWKCCPVTGSMPKPYLAWQCHNKTANDFVFVSSSSLIATAGLSSDNRNICLWDTLVAPANSLVHAFTCHDSGATVLAYAPKHQLLISGGRKGFTCIFDLRQRQQRQLFQSHDSPVKAIAIDPTEEYFVTGSAEGNIKIWSLSSFSLLHTFINEHARQSIFRNIGTGVMQIETGPANHIFSCGADGTMKMRILPDQFSPLNEVLKNDVKFML.

WD repeat units follow at residues 108 to 145, 164 to 204, and 227 to 275; these read FLDS…TEDE, KTAS…RPAV, and AHPR…NDCF. Phosphoserine occurs at positions 322, 420, 423, and 434. The segment at 418-442 is disordered; the sequence is PSSEASVEDSIQADLKSDEELDDGV. One copy of the WD 4 repeat lies at 474-514; sequence DHQIEVLLSEWSKNADMLFSIHPMDGSLLVWHVDWLDEYQP. The residue at position 572 (serine 572) is a Phosphoserine. WD repeat units follow at residues 578 to 619 and 842 to 893; these read AHSK…ESAF and KKRL…TPVS. Phosphoserine occurs at positions 916 and 922. WD repeat units lie at residues 970-1008, 1145-1193, and 1208-1248; these read HLSS…GESA, EDGS…PLSK, and GAPP…EPVI. Serine 1829, serine 1896, serine 1903, and serine 1965 each carry phosphoserine. Disordered stretches follow at residues 2364 to 2406 and 2431 to 2462; these read GQAN…PPAV and QSRA…GLQL. The segment covering 2385-2398 has biased composition (low complexity); it reads SKVSARESPVSSSS. Residues 2437–2455 show a composition bias toward acidic residues; it reads DSEESLESDDEEEEDDDDA. WD repeat units follow at residues 2728–2769, 2771–2810, 2822–2864, 2870–2909, 2912–2951, and 2964–3002; these read KAIN…TCFR, GGNS…CPVT, CHNK…ANSL, CHDS…QRQL, SHDS…LLHT, and NIGT…SPLN.

The chain is DmX-like protein 1 (Dmxl1) from Mus musculus (Mouse).